Here is a 124-residue protein sequence, read N- to C-terminus: Small ribosomal subunit protein uS12c (124 aa).

Residues 104-124 (SGGVKDRTQRRSKYGVKKPKS) form a disordered region. Positions 113-124 (RRSKYGVKKPKS) are enriched in basic residues.

This sequence belongs to the universal ribosomal protein uS12 family. As to quaternary structure, part of the 30S ribosomal subunit.

The protein resides in the plastid. The protein localises to the chloroplast. With S4 and S5 plays an important role in translational accuracy. Located at the interface of the 30S and 50S subunits. In Thalassiosira pseudonana (Marine diatom), this protein is Small ribosomal subunit protein uS12c (rps12).